The chain runs to 165 residues: 3-isopropylmalate dehydratase small subunit (165 aa).

Belongs to the LeuD family. LeuD type 2 subfamily. Heterodimer of LeuC and LeuD.

It carries out the reaction (2R,3S)-3-isopropylmalate = (2S)-2-isopropylmalate. Its pathway is amino-acid biosynthesis; L-leucine biosynthesis; L-leucine from 3-methyl-2-oxobutanoate: step 2/4. Functionally, catalyzes the isomerization between 2-isopropylmalate and 3-isopropylmalate, via the formation of 2-isopropylmaleate. This chain is 3-isopropylmalate dehydratase small subunit, found in Saccharolobus islandicus (strain Y.G.57.14 / Yellowstone #1) (Sulfolobus islandicus).